A 235-amino-acid chain; its full sequence is Ribonuclease PH (235 aa).

Phosphate contacts are provided by residues R86 and 124–126; that span reads GTR.

The protein belongs to the RNase PH family. Homohexameric ring arranged as a trimer of dimers.

It carries out the reaction tRNA(n+1) + phosphate = tRNA(n) + a ribonucleoside 5'-diphosphate. Functionally, phosphorolytic 3'-5' exoribonuclease that plays an important role in tRNA 3'-end maturation. Removes nucleotide residues following the 3'-CCA terminus of tRNAs; can also add nucleotides to the ends of RNA molecules by using nucleoside diphosphates as substrates, but this may not be physiologically important. Probably plays a role in initiation of 16S rRNA degradation (leading to ribosome degradation) during starvation. The polypeptide is Ribonuclease PH (Francisella tularensis subsp. holarctica (strain FTNF002-00 / FTA)).